The primary structure comprises 98 residues: MPYIYMNITLAFVISLIGTLMYRSHLMSSLLCLEGMLLSLFTLNALLSLNMNFTLSTMVPLILLVFAACEAAVGLALLVMISNTYGLDYVQNLNLLQC.

3 helical membrane-spanning segments follow: residues 1 to 21, 29 to 49, and 61 to 81; these read MPYI…GTLM, SLLC…LLSL, and LILL…LVMI.

Belongs to the complex I subunit 4L family. In terms of assembly, core subunit of respiratory chain NADH dehydrogenase (Complex I) which is composed of 45 different subunits.

Its subcellular location is the mitochondrion inner membrane. The catalysed reaction is a ubiquinone + NADH + 5 H(+)(in) = a ubiquinol + NAD(+) + 4 H(+)(out). Its function is as follows. Core subunit of the mitochondrial membrane respiratory chain NADH dehydrogenase (Complex I) which catalyzes electron transfer from NADH through the respiratory chain, using ubiquinone as an electron acceptor. Part of the enzyme membrane arm which is embedded in the lipid bilayer and involved in proton translocation. The chain is NADH-ubiquinone oxidoreductase chain 4L (MT-ND4L) from Elephas maximus (Indian elephant).